Here is a 503-residue protein sequence, read N- to C-terminus: MSDRFVIWAPSMHNEPAAKCGYCHGNKGGNMDQLFALDSWAHRYMNKMDVVKIENCTIGSFVEHMDVATYDRMCNMGFRRSGKFLYKVDPLRNCCRLYTIRTAPQELNMTKELKKCISRFATRITSEDYCPAAVASSDFVGKIVNAEMNSKTFYTRFEPALYSEEKYHLFVKYQEKVHQDYNNSPKSFKRFLCDTPFGPEAVLGTQESWEQLNNWQRMKPGEKLKHMGPVHECYYYEGKLIAITVSDILPSGISSVYFIWDPDYSKWSLGKLSALRDLAIIQRTNLQYYYLGYYIEDCPKMNYKANYGAEVLDVCHSKYIPLKPIQDMISRGKLFVIGEEETKVTKELYLVDSETGRGEGFPTDNVVKYKNIAEEIYGVGGCAFKSANESALELKELYGIPYEEEDLDTIYHLKEHNGHAPNGIPNVVPGLLPLWELLDIMQSGKITDLEGRLFLFEIETEGIRPLINFYSEPPNVKKRICDVIRLFGFETCMKAVILYSEQM.

Belongs to the R-transferase family.

It is found in the cytoplasm. The enzyme catalyses an N-terminal L-alpha-aminoacyl-[protein] + L-arginyl-tRNA(Arg) = an N-terminal L-arginyl-L-aminoacyl-[protein] + tRNA(Arg) + H(+). Involved in the post-translational conjugation of arginine to the N-terminal aspartate or glutamate of a protein. This arginylation is required for degradation of the protein via the ubiquitin pathway. Does not arginylate cysteine residues. This is Arginyl-tRNA--protein transferase 1 (ATE1) from Saccharomyces cerevisiae (strain ATCC 204508 / S288c) (Baker's yeast).